We begin with the raw amino-acid sequence, 436 residues long: GTPase Der (436 aa).

EngA-type G domains lie at 4–167 (PVVA…PKRG) and 176–351 (IKFC…ENHA). GTP-binding positions include 10 to 17 (GRPNVGKS), 57 to 61 (DTGGI), 119 to 122 (NKID), 182 to 189 (GRPNVGKS), 229 to 233 (DTAGM), and 294 to 297 (NKWD). The KH-like domain occupies 352 to 436 (MRVQTNVLNE…PIKIIARPRK (85 aa)).

This sequence belongs to the TRAFAC class TrmE-Era-EngA-EngB-Septin-like GTPase superfamily. EngA (Der) GTPase family. Associates with the 50S ribosomal subunit.

Its function is as follows. GTPase that plays an essential role in the late steps of ribosome biogenesis. This Geobacillus sp. (strain WCH70) protein is GTPase Der.